We begin with the raw amino-acid sequence, 200 residues long: Holliday junction branch migration complex subunit RuvA (200 aa).

Residues 1-63 form a domain I region; it reads MYAYVKGKLT…EDAQLLYGFS (63 aa). The domain II stretch occupies residues 64-142; it reads SEEEKDMFLS…ITEEDSDSLL (79 aa). A flexible linker region spans residues 143–149; the sequence is QVDATST. The segment at 150 to 200 is domain III; it reads VQDQFVQEAMLALEALGYSKRELAKVEKTLNKNKYDSVDEAVKAGLQLVVS.

This sequence belongs to the RuvA family. Homotetramer. Forms an RuvA(8)-RuvB(12)-Holliday junction (HJ) complex. HJ DNA is sandwiched between 2 RuvA tetramers; dsDNA enters through RuvA and exits via RuvB. An RuvB hexamer assembles on each DNA strand where it exits the tetramer. Each RuvB hexamer is contacted by two RuvA subunits (via domain III) on 2 adjacent RuvB subunits; this complex drives branch migration. In the full resolvosome a probable DNA-RuvA(4)-RuvB(12)-RuvC(2) complex forms which resolves the HJ.

The protein resides in the cytoplasm. In terms of biological role, the RuvA-RuvB-RuvC complex processes Holliday junction (HJ) DNA during genetic recombination and DNA repair, while the RuvA-RuvB complex plays an important role in the rescue of blocked DNA replication forks via replication fork reversal (RFR). RuvA specifically binds to HJ cruciform DNA, conferring on it an open structure. The RuvB hexamer acts as an ATP-dependent pump, pulling dsDNA into and through the RuvAB complex. HJ branch migration allows RuvC to scan DNA until it finds its consensus sequence, where it cleaves and resolves the cruciform DNA. This Staphylococcus aureus (strain Mu3 / ATCC 700698) protein is Holliday junction branch migration complex subunit RuvA.